A 351-amino-acid chain; its full sequence is DNA polymerase IV (351 aa).

Residues 4-185 (IIHVDMDCFF…LPLGKIPGVG (182 aa)) enclose the UmuC domain. 2 residues coordinate Mg(2+): Asp-8 and Asp-103. Glu-104 is an active-site residue.

Belongs to the DNA polymerase type-Y family. As to quaternary structure, monomer. Requires Mg(2+) as cofactor.

The protein localises to the cytoplasm. The catalysed reaction is DNA(n) + a 2'-deoxyribonucleoside 5'-triphosphate = DNA(n+1) + diphosphate. In terms of biological role, poorly processive, error-prone DNA polymerase involved in untargeted mutagenesis. Copies undamaged DNA at stalled replication forks, which arise in vivo from mismatched or misaligned primer ends. These misaligned primers can be extended by PolIV. Exhibits no 3'-5' exonuclease (proofreading) activity. May be involved in translesional synthesis, in conjunction with the beta clamp from PolIII. The polypeptide is DNA polymerase IV (Cronobacter sakazakii (strain ATCC BAA-894) (Enterobacter sakazakii)).